A 313-amino-acid chain; its full sequence is MITDTFSRKSEYSTNKLRKRLRRLVGTAIADFNMIESGDRIMVCLSGGKDSYALLDILRNLQAHAPLDFELIAVNLDQKQPGFPEHVLPGYLSEINMPFRIVEQDTYSVVKRVIPEGKTTCSLCSRLRRGVLYRVATELGATKIALGHHRDDILETFFLNMFYGGKLKAMPPKLVSDDGCHVVIRPLAYCKEKDLAAYAQLVQFPIIPCNLCGSQPNLQRQVIKEMMQQWNKKYPGRLETMFTALQNIQLSHLADTSRYDFVGIKPHGIATEEGDKAFDEELLPDSPVGMNHDDAASELDEACSTEAVQGGTI.

The short motif at 46-51 (SGGKDS) is the PP-loop motif element. [4Fe-4S] cluster contacts are provided by Cys-121, Cys-124, and Cys-212.

The protein belongs to the TtcA family. As to quaternary structure, homodimer. Mg(2+) serves as cofactor. [4Fe-4S] cluster is required as a cofactor.

It localises to the cytoplasm. The catalysed reaction is cytidine(32) in tRNA + S-sulfanyl-L-cysteinyl-[cysteine desulfurase] + AH2 + ATP = 2-thiocytidine(32) in tRNA + L-cysteinyl-[cysteine desulfurase] + A + AMP + diphosphate + H(+). The protein operates within tRNA modification. Its function is as follows. Catalyzes the ATP-dependent 2-thiolation of cytidine in position 32 of tRNA, to form 2-thiocytidine (s(2)C32). The sulfur atoms are provided by the cysteine/cysteine desulfurase (IscS) system. This is tRNA-cytidine(32) 2-sulfurtransferase from Nitrosomonas eutropha (strain DSM 101675 / C91 / Nm57).